A 345-amino-acid polypeptide reads, in one-letter code: NADPH dehydrogenase (345 aa).

Residue Ser23–Cys26 coordinates FMN. Tyr28 is a substrate binding site. The FMN site is built by Ala60 and Gln102. His164–His167 contacts substrate. Residues Arg215 and Gly307–Arg308 contribute to the FMN site.

This sequence belongs to the NADH:flavin oxidoreductase/NADH oxidase family. NamA subfamily. As to quaternary structure, homotetramer. FMN is required as a cofactor.

The enzyme catalyses A + NADPH + H(+) = AH2 + NADP(+). Functionally, catalyzes the reduction of the double bond of an array of alpha,beta-unsaturated aldehydes and ketones. It also reduces the nitro group of nitroester and nitroaromatic compounds. It could have a role in detoxification processes. The chain is NADPH dehydrogenase from Bacillus cereus (strain Q1).